The sequence spans 153 residues: uncharacterized protein (153 aa).

Positions 1–19 are cleaved as a signal peptide; it reads MKACLLLFFYFSFICQLHG.

This is an uncharacterized protein from Escherichia coli (strain K12).